Here is a 412-residue protein sequence, read N- to C-terminus: Double C2-like domain-containing protein beta (412 aa).

Residues 1 to 36 (MTLRRRGEKATISIQEHMAIDVCPGPIRPIKQISDY) form a negatively regulates targeting to plasma membrane region. Residues 1 to 90 (MTLRRRGEKA…EDVDQLFGAY (90 aa)) form a mediates interaction with DYNLT1 region. The tract at residues 38–123 (PRFPRGLPPT…PDADGYESDD (86 aa)) is disordered. The segment covering 49-73 (APRASAPPDAPARSPAATAGPRSPS) has biased composition (low complexity). Residues 95-108 (GPSPGPSPVRPPAK) show a composition bias toward pro residues. A compositionally biased stretch (acidic residues) spans 112-123 (DEPDADGYESDD). C2 domains follow at residues 126 to 250 (ALGT…SICL) and 266 to 399 (ERGR…ERWH). Ca(2+) contacts are provided by Asp157, Asp163, Asp218, Asp220, Asp297, Asp303, Asp357, Asp359, and Asp365. The segment at 257–375 (DKAEDKSLEE…FIGGVVLGIN (119 aa)) is mediates interaction with STXBP3. Phosphoserine is present on Ser411.

Interacts with STX4; the interaction is calcium-dependent, increased by insulin and glucose, and mediates vesicle fusion with plasma membrane in pancreatic cells and adipocytes. Interacts with STXBP3; the interaction is direct, occurs at the cell membrane and regulates glucose-stimulated insulin secretion. Interacts with cytoplasmic dynein light chain DYNLT1. Interacts with the SNARE (soluble N-ethylmaleimide-sensitive factor attached protein receptor) complex composed of SNAP25, STX1A and VAMP2; the interaction is calcium-dependent and competitive with SYT1. May interact with UNC13A; the interaction mediates targeting to the plasma membrane. The cofactor is Ca(2+). Expressed in brain; highly enriched in neurons.

The protein localises to the cytoplasm. It localises to the cytoplasmic granule. It is found in the cell membrane. Functionally, calcium sensor which positively regulates SNARE-dependent fusion of vesicles with membranes. Binds phospholipids in a calcium-dependent manner and may act at the priming stage of fusion by modifying membrane curvature to stimulate fusion. Involved in calcium-triggered exocytosis in chromaffin cells and calcium-dependent spontaneous release of neurotransmitter in absence of action potentials in neuronal cells. Involved both in glucose-stimulated insulin secretion in pancreatic cells and insulin-dependent GLUT4 transport to the plasma membrane in adipocytes. This chain is Double C2-like domain-containing protein beta (Doc2b), found in Rattus norvegicus (Rat).